We begin with the raw amino-acid sequence, 1607 residues long: Abnormal cell migration protein 38 (1607 aa).

12 disordered regions span residues 14–52 (EFNK…SQDF), 67–93 (RLSP…QYHV), 167–222 (STSY…AAQA), 326–425 (GSSA…PPSQ), 459–478 (SPNT…GMDQ), 549–594 (MVHR…QHSY), 845–931 (YDEN…PETE), 1017–1061 (SVQV…DYDM), 1141–1241 (EPSP…VTPK), 1319–1378 (ETPN…KGQL), 1392–1445 (FANV…PQAV), and 1517–1607 (KVKT…STDP). Composition is skewed to polar residues over residues 81 to 93 (PGPS…QYHV) and 179 to 191 (PSGN…NHQQ). Residues 195–205 (VPQVQQQPAKP) are compositionally biased toward low complexity. A compositionally biased stretch (basic residues) spans 206 to 218 (KTTKKRPPPKKKT). Over residues 327–341 (SSASSSAQPSQPAKK) the composition is skewed to low complexity. Polar residues-rich tracts occupy residues 349–371 (VPNT…QITP) and 379–425 (PTTT…PPSQ). The span at 585-594 (NSHSQSQHSY) shows a compositional bias: low complexity. Residues 858-871 (EEPESESESEPEAE) are compositionally biased toward acidic residues. Composition is skewed to basic and acidic residues over residues 872–886 (PEPK…EPAR) and 907–917 (YRNESESTFDW). Low complexity-rich tracts occupy residues 1333 to 1354 (PNIP…SVSV), 1395 to 1419 (VPSS…VSAK), and 1584 to 1601 (LLGT…SSGL).

In terms of tissue distribution, expressed in gonad distal tip cells and gonad sheath cells.

The protein resides in the nucleus. The protein localises to the cytoplasm. Its function is as follows. During gonad development, involved in distal tip cell (DTC) migration from the dorsal side of the hermaphrodite body to the midbody which allows for the formation of gonad arms. Role in gonad DTC migration may be in association with integrin related proteins ina-1 and mig-15. The sequence is that of Abnormal cell migration protein 38 from Caenorhabditis elegans.